We begin with the raw amino-acid sequence, 145 residues long: Hemoglobin subunit beta-2 (145 aa).

The 144-residue stretch at 2–145 (HLTAEDRKEI…GVSHALGHGY (144 aa)) folds into the Globin domain. Residues His-63 and His-92 each coordinate heme b.

It belongs to the globin family. In terms of assembly, minor hemoglobin is a tetramer of two alpha-2 chains and two beta-2 chains. In terms of tissue distribution, red blood cells.

Functionally, involved in oxygen transport from the lung to the various peripheral tissues. This is Hemoglobin subunit beta-2 (HBB2) from Triturus cristatus (Great crested newt).